The sequence spans 317 residues: Melanocyte-stimulating hormone receptor (317 aa).

Topologically, residues 1–37 are extracellular; it reads MPVQGSQRRLLGSLNSTPTAPPHLGLAANQTGARCLE. N-linked (GlcNAc...) asparagine glycosylation is present at N29. The chain crosses the membrane as a helical span at residues 38-63; the sequence is VSIPDGLFLSLGLVSLVENVLVVTAI. Residues 64–72 lie on the Cytoplasmic side of the membrane; sequence AKNRNLHSP. A helical transmembrane segment spans residues 73-93; sequence MYCFICCLALSDLLVSGSNML. The Extracellular portion of the chain corresponds to 94-118; that stretch reads ETAVILLLEAGALAARAAVVQQLDN. The chain crosses the membrane as a helical span at residues 119–140; it reads VIDVITCSSMLSSLCFLGAIAV. Topologically, residues 141–163 are cytoplasmic; sequence DRYISIFYALRYHSIVTLPRARR. The helical transmembrane segment at 164 to 183 threads the bilayer; the sequence is AVAAIWVASVLFSMLFIAYY. The Extracellular portion of the chain corresponds to 184–191; sequence DHAAVLLC. A helical membrane pass occupies residues 192 to 211; it reads LVVFFLAMLVLMAVLYIHML. Over 212–240 the chain is Cytoplasmic; sequence VRACQHAQGIARLHKRQRPAHQGFGLKGA. A helical membrane pass occupies residues 241–266; that stretch reads ATLTILLGIFFLCWGPFFLHLTLIVL. Residues 267–279 lie on the Extracellular side of the membrane; it reads CPQHPTCSCIFKN. The chain crosses the membrane as a helical span at residues 280–300; it reads FNLFLALIICNAIIDPLIYAF. Topologically, residues 301-317 are cytoplasmic; the sequence is RSQELRRTLKEVLLCSW. A lipid anchor (S-palmitoyl cysteine) is attached at C315.

Belongs to the G-protein coupled receptor 1 family. Interacts with MGRN1, but does not undergo MGRN1-mediated ubiquitination; this interaction competes with GNAS-binding and thus inhibits agonist-induced cAMP production. Interacts with OPN3; the interaction results in a decrease in MC1R-mediated cAMP signaling and ultimately a decrease in melanin production in melanocytes.

The protein localises to the cell membrane. Functionally, receptor for MSH (alpha, beta and gamma) and ACTH. The activity of this receptor is mediated by G proteins which activate adenylate cyclase. Mediates melanogenesis, the production of eumelanin (black/brown) and phaeomelanin (red/yellow), via regulation of cAMP signaling in melanocytes. This chain is Melanocyte-stimulating hormone receptor (MC1R), found in Cercopithecus diana (Diana monkey).